Here is a 304-residue protein sequence, read N- to C-terminus: tRNA U34 carboxymethyltransferase (304 aa).

Carboxy-S-adenosyl-L-methionine contacts are provided by residues lysine 73, tryptophan 87, lysine 92, glycine 111, 133-135 (DPS), 160-161 (VE), tyrosine 180, and arginine 295.

The protein belongs to the class I-like SAM-binding methyltransferase superfamily. CmoB family. Homotetramer.

It carries out the reaction carboxy-S-adenosyl-L-methionine + 5-hydroxyuridine(34) in tRNA = 5-carboxymethoxyuridine(34) in tRNA + S-adenosyl-L-homocysteine + H(+). Catalyzes carboxymethyl transfer from carboxy-S-adenosyl-L-methionine (Cx-SAM) to 5-hydroxyuridine (ho5U) to form 5-carboxymethoxyuridine (cmo5U) at position 34 in tRNAs. This is tRNA U34 carboxymethyltransferase from Aliarcobacter butzleri (strain RM4018) (Arcobacter butzleri).